The following is a 475-amino-acid chain: Protein arginine N-methyltransferase 2 (475 aa).

Positions 167–194 (EFLSDDDDEEMDVDDDEEDESRDGEETG) are disordered. Acidic residues predominate over residues 169-194 (LSDDDDEEMDVDDDEEDESRDGEETG). The RMT2 domain occupies 247-475 (LAGSQMDYLK…EDFYLPVCTF (229 aa)). Residues Tyr-254, Met-285, 310–315 (FGLGII), 331–333 (EAH), 358–359 (WQ), and Asp-378 each bind S-adenosyl-L-methionine.

The protein belongs to the class I-like SAM-binding methyltransferase superfamily. RMT2 methyltransferase family. In terms of assembly, monomer.

Its subcellular location is the cytoplasm. The protein localises to the nucleus. Functionally, S-adenosyl-L-methionine-dependent protein-arginine N-methyltransferase that methylates the delta-nitrogen atom of arginine residues to form N5-methylarginine (type IV) in target proteins. Monomethylates ribosomal protein L12. This Yarrowia lipolytica (strain CLIB 122 / E 150) (Yeast) protein is Protein arginine N-methyltransferase 2.